The primary structure comprises 267 residues: 2-oxo-hept-4-ene-1,7-dioate hydratase (267 aa).

Glu106, Glu108, and Glu139 together coordinate Mg(2+).

It belongs to the hydratase/decarboxylase family. Homodecamer. Mg(2+) serves as cofactor.

It catalyses the reaction (4Z)-2-oxohept-4-enedioate + H2O = (4S)-4-hydroxy-2-oxoheptanedioate. The protein operates within aromatic compound metabolism; 4-hydroxyphenylacetate degradation; pyruvate and succinate semialdehyde from 4-hydroxyphenylacetate: step 6/7. Its function is as follows. Transforms 2-oxo-hept-4-ene-1,7-dioate (OHED) into 4-hydroxy-2-oxoheptanedioate, a step in the 4-hydroxyphenylacetic acid (4-HPA) degradation pathway. This is 2-oxo-hept-4-ene-1,7-dioate hydratase from Escherichia coli.